The chain runs to 183 residues: MNITQIIEKLKQNEVVAYPTEAVFGLGCNPFSQSAVEKLLILKQRPREKGLILVAPKLDYFFSFIDKEQINSQHWQKLQQTYPRPITWIVPAKKDIAKFLCGNFNSIAIRVSQHPAIKILCEQTGFALTSTSANLSGIAPCKTSDEVRLQFGADFPVLDMSVGSAAKPSEIRDLFTNQLVRQG.

Residues 1–183 (MNITQIIEKL…LFTNQLVRQG (183 aa)) form the YrdC-like domain.

It belongs to the SUA5 family. TsaC subfamily.

The protein resides in the cytoplasm. It catalyses the reaction L-threonine + hydrogencarbonate + ATP = L-threonylcarbamoyladenylate + diphosphate + H2O. Required for the formation of a threonylcarbamoyl group on adenosine at position 37 (t(6)A37) in tRNAs that read codons beginning with adenine. Catalyzes the conversion of L-threonine, HCO(3)(-)/CO(2) and ATP to give threonylcarbamoyl-AMP (TC-AMP) as the acyladenylate intermediate, with the release of diphosphate. This chain is Threonylcarbamoyl-AMP synthase, found in Histophilus somni (strain 129Pt) (Haemophilus somnus).